Reading from the N-terminus, the 390-residue chain is Protein phosphatase 1B (390 aa).

A compositionally biased stretch (basic and acidic residues) spans 1-14 (MGAFLDKPKTEKHN). The segment at 1–20 (MGAFLDKPKTEKHNAHGAGN) is disordered. A lipid anchor (N-myristoyl glycine) is attached at G2. K12 participates in a covalent cross-link: Glycyl lysine isopeptide (Lys-Gly) (interchain with G-Cter in ISG15). One can recognise a PPM-type phosphatase domain in the interval 23–295 (RYGLSSMQGW…DNMSVVLVCF (273 aa)). D60, G61, D243, and D286 together coordinate Mn(2+). The segment at 371–390 (NPHKDNDGGAGDLEDSLVAL) is disordered. S386 is modified (phosphoserine).

The protein belongs to the PP2C family. In terms of assembly, monomer. Interacts with PAK6. Interacts with the phosphorylated form of IKBKB/IKKB. Requires Mg(2+) as cofactor. It depends on Mn(2+) as a cofactor. Post-translationally, isgylation negatively regulates its activity. N-myristoylation is essential for the recognition of its substrates for dephosphorylation. In terms of tissue distribution, isoform 1: Expressed ubiquitously. Isoform 2: Expressed exclusively in testis and intestine. Isoform 3: Expressed exclusively in brain and intestine. Isoform 4: Expressed exclusively in testis and intestine.

It localises to the cytoplasm. The protein localises to the cytosol. It is found in the membrane. The catalysed reaction is O-phospho-L-seryl-[protein] + H2O = L-seryl-[protein] + phosphate. It carries out the reaction O-phospho-L-threonyl-[protein] + H2O = L-threonyl-[protein] + phosphate. In terms of biological role, enzyme with a broad specificity. Dephosphorylates PRKAA1 and PRKAA2. Inhibits TBK1-mediated antiviral signaling by dephosphorylating it at 'Ser-172'. Plays an important role in the termination of TNF-alpha-mediated NF-kappa-B activation through dephosphorylating and inactivating IKBKB/IKKB. This is Protein phosphatase 1B (Ppm1b) from Mus musculus (Mouse).